The sequence spans 400 residues: Tektin-B1 (400 aa).

3 coiled-coil regions span residues 35-81, 236-294, and 310-353; these read TRLS…AKAL, FALR…LENR, and GLVN…LELK.

It belongs to the tektin family. As to quaternary structure, may form a heterodimer with tektin a or exist as a homodimer. Cilia and flagella.

The protein resides in the cytoplasm. It is found in the cytoskeleton. In terms of biological role, structural component of ciliary and flagellar microtubules. The polypeptide is Tektin-B1 (Strongylocentrotus purpuratus (Purple sea urchin)).